The following is a 682-amino-acid chain: Transcription factor 12 (682 aa).

The 9aaTAD motif lies at 19 to 27 (DLLDFSAMF). 3 disordered regions span residues 25 to 122 (AMFS…LYSR), 140 to 219 (LGSP…PPTS), and 281 to 313 (SVSP…ASHT). 2 stretches are compositionally biased toward polar residues: residues 30–48 (PVNS…QFSG) and 56–76 (GTTS…SRGF). Phosphoserine occurs at positions 47, 67, and 79. A compositionally biased stretch (basic and acidic residues) spans 81–93 (HYSDHLNDSRLGA). S98 is subject to Phosphoserine. Composition is skewed to polar residues over residues 101–121 (PFMN…SLYS) and 144–163 (AQLS…SATS). Residue K110 forms a Glycyl lysine isopeptide (Lys-Gly) (interchain with G-Cter in SUMO2) linkage. S116 is subject to Phosphoserine. The tract at residues 119–140 (LYSRDTGLPGCQSSLLRQDLGL) is leucine-zipper. Residue K181 forms a Glycyl lysine isopeptide (Lys-Gly) (interchain with G-Cter in SUMO2) linkage. The segment at 182-196 (KVRKVPPGLPSSVYA) is interaction with RUNX1T1. The span at 282–306 (VSPTDINTSLPPMSSFHRGSTSSSP) shows a compositional bias: polar residues. Residue T313 is modified to Phosphothreonine. Phosphoserine is present on S333. Disordered regions lie at residues 349-395 (PDHT…SLHS) and 462-580 (SASM…ERRM). The segment covering 352-363 (TSSSFPSNPSTP) has biased composition (low complexity). 2 stretches are compositionally biased toward polar residues: residues 364–376 (VGSP…TSQW) and 383–395 (APSS…SLHS). Low complexity predominate over residues 481 to 492 (SVLSSTVTTSST). Polar residues predominate over residues 506-517 (LQSQSGTVVTTE). Composition is skewed to basic and acidic residues over residues 518-530 (IKTE…ENLH) and 536-551 (DDMK…DIKV). A Glycyl lysine isopeptide (Lys-Gly) (interchain with G-Cter in SUMO2) cross-link involves residue K519. A Phosphoserine modification is found at S540. A Glycyl lysine isopeptide (Lys-Gly) (interchain with G-Cter in SUMO2) cross-link involves residue K550. T557 carries the phosphothreonine modification. Residues S558 and S559 each carry the phosphoserine modification. Positions 568-580 (PEQKIEREKERRM) are enriched in basic and acidic residues. The 54-residue stretch at 577–630 (ERRMANNARERLRVRDINEAFKELGRMCQLHLKSEKPQTKLLILHQAVAVILSL) folds into the bHLH domain. Glycyl lysine isopeptide (Lys-Gly) (interchain with G-Cter in SUMO2) cross-links involve residues K609 and K653. The tract at residues 632–655 (QQVRERNLNPKAACLKRREEEKVS) is class A specific domain. Residues 651-682 (EEKVSAVSAEPPTTLPGTHPGLSETTNPMGHM) form a disordered region. Residues 661–672 (PPTTLPGTHPGL) show a composition bias toward low complexity. Positions 673 to 682 (SETTNPMGHM) are enriched in polar residues.

As to quaternary structure, efficient DNA binding requires dimerization with another bHLH protein. Forms homo- or heterooligomers with myogenin, E12 and ITF2 proteins. Interacts with PTF1A. Interacts with NEUROD2. Interacts with RUNX1T1. Interacts with AML1-MTG8/ETO (via nervy homology region 2 in oligomerized form). Interacts with BHLHA9. In terms of tissue distribution, expressed in several tissues and cell types including skeletal muscle, thymus, and a B-cell line.

It localises to the nucleus. Its function is as follows. Transcriptional regulator. Involved in the initiation of neuronal differentiation. Activates transcription by binding to the E box (5'-CANNTG-3'). May be involved in the functional network that regulates the development of the GnRH axis. The protein is Transcription factor 12 (TCF12) of Homo sapiens (Human).